A 458-amino-acid polypeptide reads, in one-letter code: NADH-quinone oxidoreductase subunit N (458 aa).

13 helical membrane-spanning segments follow: residues 3-23 (QYLF…LLFL), 29-49 (FGLI…TCTS), 64-84 (QNVK…AIAV), 92-112 (FSVL…SSTL), 147-167 (TLLG…IFVV), 188-208 (ILLF…HAWI), 222-242 (FFAV…ISNL), 265-285 (NILF…AFGQ), 291-311 (FIGF…SNSA), 320-340 (IAYA…VLML), 358-378 (VALA…FIGF), 394-414 (IPTA…YARI), and 437-457 (LLTS…VLLI).

This sequence belongs to the complex I subunit 2 family. As to quaternary structure, NDH-1 is composed of 14 different subunits. Subunits NuoA, H, J, K, L, M, N constitute the membrane sector of the complex.

It localises to the cell inner membrane. The catalysed reaction is a quinone + NADH + 5 H(+)(in) = a quinol + NAD(+) + 4 H(+)(out). NDH-1 shuttles electrons from NADH, via FMN and iron-sulfur (Fe-S) centers, to quinones in the respiratory chain. The immediate electron acceptor for the enzyme in this species is believed to be ubiquinone. Couples the redox reaction to proton translocation (for every two electrons transferred, four hydrogen ions are translocated across the cytoplasmic membrane), and thus conserves the redox energy in a proton gradient. In Neorickettsia risticii (strain Illinois), this protein is NADH-quinone oxidoreductase subunit N.